The chain runs to 386 residues: Methionine aminotransferase (386 aa).

Lysine 236 carries the N6-(pyridoxal phosphate)lysine modification.

This sequence belongs to the class-I pyridoxal-phosphate-dependent aminotransferase family. Homodimer. The cofactor is pyridoxal 5'-phosphate.

The protein resides in the cytoplasm. The enzyme catalyses a 2-oxocarboxylate + L-methionine = 4-methylsulfanyl-2-oxobutanoate + an L-alpha-amino acid. In terms of biological role, shows aminotransferase activity with methionine and histidine as substrates, and to a lesser extent also with phenylalanine. In Escherichia coli (strain K12), this protein is Methionine aminotransferase (ybdL).